A 290-amino-acid chain; its full sequence is Putative tyrosine recombinase TTE1313 (290 aa).

The 85-residue stretch at 1 to 85 (MAESVVGEFL…SIKAFYHYLF (85 aa)) folds into the Core-binding (CB) domain. Positions 106–290 (KEPVTLTVEQ…EVYNKFHPRA (185 aa)) constitute a Tyr recombinase domain. Arg239 is an active-site residue. Catalysis depends on Tyr283, which acts as the O-(3'-phospho-DNA)-tyrosine intermediate.

This sequence belongs to the 'phage' integrase family.

Its subcellular location is the cytoplasm. Functionally, site-specific tyrosine recombinase, which acts by catalyzing the cutting and rejoining of the recombining DNA molecules. This chain is Putative tyrosine recombinase TTE1313, found in Caldanaerobacter subterraneus subsp. tengcongensis (strain DSM 15242 / JCM 11007 / NBRC 100824 / MB4) (Thermoanaerobacter tengcongensis).